Here is a 491-residue protein sequence, read N- to C-terminus: UDP-GalNAc:beta-1,3-N-acetylgalactosaminyltransferase 2 (491 aa).

Residues 1 to 2 are Cytoplasmic-facing; the sequence is MR. The chain crosses the membrane as a helical; Signal-anchor for type II membrane protein span at residues 3 to 23; that stretch reads SAAAALSVCVLAVLLHWICWT. Topologically, residues 24–491 are lumenal; the sequence is DRSAELLGFR…NKCGDPCGCS (468 aa). N167 and N230 each carry an N-linked (GlcNAc...) asparagine glycan.

It belongs to the glycosyltransferase 31 family.

It is found in the golgi apparatus membrane. The protein resides in the endoplasmic reticulum. It catalyses the reaction 3-O-(N-acetyl-beta-D-glucosaminyl-(1-&gt;4)-alpha-D-mannosyl)-L-threonyl-[protein] + UDP-N-acetyl-alpha-D-galactosamine = 3-O-[beta-D-GalNAc-(1-&gt;3)-beta-D-GlcNAc-(1-&gt;4)-alpha-D-Man]-L-Thr-[protein] + UDP + H(+). Its pathway is protein modification; protein glycosylation. In terms of biological role, beta-1,3-N-acetylgalactosaminyltransferase that synthesizes a unique carbohydrate structure, GalNAc-beta-1-3GlcNAc, on N- and O-glycans. Has no galactose nor galactosaminyl transferase activity toward any acceptor substrate. Involved in alpha-dystroglycan (dag1) glycosylation. This chain is UDP-GalNAc:beta-1,3-N-acetylgalactosaminyltransferase 2 (b3galnt2), found in Danio rerio (Zebrafish).